The sequence spans 151 residues: Small ribosomal subunit protein uS15 (151 aa).

This sequence belongs to the universal ribosomal protein uS15 family.

This chain is Small ribosomal subunit protein uS15 (RpS13), found in Plutella xylostella (Diamondback moth).